The chain runs to 161 residues: 3-isopropylmalate dehydratase small subunit (161 aa).

Belongs to the LeuD family. LeuD type 2 subfamily. As to quaternary structure, heterodimer of LeuC and LeuD.

It catalyses the reaction (2R,3S)-3-isopropylmalate = (2S)-2-isopropylmalate. It participates in amino-acid biosynthesis; L-leucine biosynthesis; L-leucine from 3-methyl-2-oxobutanoate: step 2/4. Catalyzes the isomerization between 2-isopropylmalate and 3-isopropylmalate, via the formation of 2-isopropylmaleate. The polypeptide is 3-isopropylmalate dehydratase small subunit (Sulfolobus acidocaldarius (strain ATCC 33909 / DSM 639 / JCM 8929 / NBRC 15157 / NCIMB 11770)).